A 147-amino-acid polypeptide reads, in one-letter code: Large ribosomal subunit protein uL13 (147 aa).

It belongs to the universal ribosomal protein uL13 family. As to quaternary structure, part of the 50S ribosomal subunit.

In terms of biological role, this protein is one of the early assembly proteins of the 50S ribosomal subunit, although it is not seen to bind rRNA by itself. It is important during the early stages of 50S assembly. In Arthrobacter sp. (strain FB24), this protein is Large ribosomal subunit protein uL13.